Here is a 75-residue protein sequence, read N- to C-terminus: MSIGLAVGLIVGLSILFFIIGGVVAFFVTRRLFQKQLKENPPINEKMIRAMFLQMGVKASESRIRQVMRSMQQAK.

The helical transmembrane segment at 8–28 (GLIVGLSILFFIIGGVVAFFV) threads the bilayer.

This sequence belongs to the UPF0154 family.

Its subcellular location is the membrane. This is UPF0154 protein MYPU_1460 from Mycoplasmopsis pulmonis (strain UAB CTIP) (Mycoplasma pulmonis).